The sequence spans 271 residues: Transmembrane protein 150A (271 aa).

Residues Met-1 to Thr-2 are Cytoplasmic-facing. Residues Ala-3–Tyr-23 form a helical membrane-spanning segment. Residues Ala-24–Glu-75 lie on the Extracellular side of the membrane. N-linked (GlcNAc...) asparagine glycosylation is found at Asn-37 and Asn-41. The chain crosses the membrane as a helical span at residues Ser-76–Leu-96. The Cytoplasmic portion of the chain corresponds to Arg-97–Ser-108. The helical transmembrane segment at Trp-109 to Gly-129 threads the bilayer. Residues Asn-130 to His-140 lie on the Extracellular side of the membrane. A helical transmembrane segment spans residues Tyr-141–Leu-161. The Cytoplasmic portion of the chain corresponds to Phe-162–Arg-178. A helical transmembrane segment spans residues Ser-179–Glu-199. The Extracellular segment spans residues Ser-200–Glu-211. The helical transmembrane segment at Trp-212–Ile-232 threads the bilayer. Over Ser-233–Ile-271 the chain is Cytoplasmic.

Belongs to the DRAM/TMEM150 family. Interacts (via C-terminal cytoplasmic tail) with PI4KA.

It localises to the cell membrane. Its function is as follows. Regulates localization of phosphatidylinositol 4-kinase (PI4K) to the plasma membrane, possibly by reducing the association of TTC7 (TTC7A or TTC7B) with the PI4K complex. Acts as a regulator of phosphatidylinositol 4-phosphate (PtdIns(4)P) synthesis. May also play a role in fasting-induced catabolism. This chain is Transmembrane protein 150A (Tmem150a), found in Mus musculus (Mouse).